The following is a 147-amino-acid chain: Cyanate hydratase (147 aa).

Catalysis depends on residues R88, E91, and S114.

Belongs to the cyanase family.

It carries out the reaction cyanate + hydrogencarbonate + 3 H(+) = NH4(+) + 2 CO2. Catalyzes the reaction of cyanate with bicarbonate to produce ammonia and carbon dioxide. In Variovorax paradoxus (strain S110), this protein is Cyanate hydratase.